A 467-amino-acid chain; its full sequence is MRIPYSNLFSAAAGLALFASTACAAPVMPATDSDIAHAGIRPELDNAFYDSHGEAATPKHKPHAGPNAAPLLSASNADTTGLDSHYIIVLQPDLSEQEFQAHTNWVSEMHQMDIASQEDEYYDTSDSNYMFGLKHVYDFGEDSFKGYSGQFSSNIVEQIRLHPHVIAVERDQVVSIKKLETQSGAPWGLARISHKSVKYDDIGKYVYDSSAGDNITAYVVDTGVSIHHVEFEGRASWGATIPSGDVDEDNNGHGTHVAGTIASRAYGVAKKAEIVAVKVLRSSGSGTMADVIAGVEWTVRHHKSSGKKTSVGNMSLGGGNSFVLDMAVDSAVTNGVIYAVAAGNEYDDACYSSPAASKKAITVGASTINDQMAYFSNYGSCVDIFAPGLNILSTWIGSNTSTNTISGTSMATPHVAGLSAYYLGLHPAASASEVKDAIIKMGIHDVLLSIPVGSSTINLLAFNGAQE.

The Inhibitor I9 domain occupies 86–176; the sequence is YIIVLQPDLS…AVERDQVVSI (91 aa). The region spanning 186-467 is the Peptidase S8 domain; the sequence is PWGLARISHK…NLLAFNGAQE (282 aa). Residues aspartate 221, histidine 253, and serine 409 each act as charge relay system in the active site.

The protein belongs to the peptidase S8 family.

The chain is Sexual differentiation process putative subtilase-type proteinase isp6 (isp6) from Schizosaccharomyces pombe (strain 972 / ATCC 24843) (Fission yeast).